The primary structure comprises 263 residues: MINVAVLGACGRMGSLIVENVINSKDMQLVAAFDISYFGRDAGEFARVGKLGVQISDVKNLETVLKESKADVLIDFTAAGATVVNAPIAARAGVNLIIGTTGLTPEQRAVIDEAIQEGQVSAVISPNYSVGVNVFFKIIREAAKYLADYDIEIIEAHHNQKKDAPSGTALRAADIISEAVGGREYVYGREGIAPRGKEIGIHGVRAGDITGDHIVLFAGNSERIEIKHIAHSRQIFAKGAVRAAEWVCRQKPGIYSMDDVLGL.

NAD(+)-binding positions include 8–13 (GACGRM), aspartate 34, 99–101 (GTT), and 125–128 (SPNY). Histidine 157 acts as the Proton donor/acceptor in catalysis. (S)-2,3,4,5-tetrahydrodipicolinate is bound at residue histidine 158. The Proton donor role is filled by lysine 161. 167–168 (GT) is a binding site for (S)-2,3,4,5-tetrahydrodipicolinate.

The protein belongs to the DapB family.

Its subcellular location is the cytoplasm. The enzyme catalyses (S)-2,3,4,5-tetrahydrodipicolinate + NAD(+) + H2O = (2S,4S)-4-hydroxy-2,3,4,5-tetrahydrodipicolinate + NADH + H(+). The catalysed reaction is (S)-2,3,4,5-tetrahydrodipicolinate + NADP(+) + H2O = (2S,4S)-4-hydroxy-2,3,4,5-tetrahydrodipicolinate + NADPH + H(+). The protein operates within amino-acid biosynthesis; L-lysine biosynthesis via DAP pathway; (S)-tetrahydrodipicolinate from L-aspartate: step 4/4. Its function is as follows. Catalyzes the conversion of 4-hydroxy-tetrahydrodipicolinate (HTPA) to tetrahydrodipicolinate. The protein is 4-hydroxy-tetrahydrodipicolinate reductase of Methanosarcina barkeri (strain Fusaro / DSM 804).